A 202-amino-acid polypeptide reads, in one-letter code: uncharacterized protein (202 aa).

The chain crosses the membrane as a helical span at residues 18–38; that stretch reads FLIFLIFLSVLGCGITISGCI.

It localises to the membrane. This is an uncharacterized protein from Methanocaldococcus jannaschii (strain ATCC 43067 / DSM 2661 / JAL-1 / JCM 10045 / NBRC 100440) (Methanococcus jannaschii).